We begin with the raw amino-acid sequence, 174 residues long: MASTTFSSAFSILSLPSSSPSPPPWAPRTLPVANRRRRAAAVASTVTESPKVLELGDAIAGLTLEEARNLVDHLQERLCVSAASFPPAAAGLRAAAVEEAPVEQTEFDVVIEEVPSSARIATIKIVRALTNLALKEAKDLIEGLPKKLKEAVSKDEAEEAKKQLEGVGAKVSIA.

A chloroplast-targeting transit peptide spans 1-45 (MASTTFSSAFSILSLPSSSPSPPPWAPRTLPVANRRRRAAAVAST).

The protein belongs to the bacterial ribosomal protein bL12 family.

It localises to the plastid. The protein resides in the chloroplast. The sequence is that of Large ribosomal subunit protein bL12cy (RPL12-2) from Secale cereale (Rye).